We begin with the raw amino-acid sequence, 103 residues long: Co-chaperonin GroES (103 aa).

The protein belongs to the GroES chaperonin family. Heptamer of 7 subunits arranged in a ring. Interacts with the chaperonin GroEL.

The protein resides in the cytoplasm. In terms of biological role, together with the chaperonin GroEL, plays an essential role in assisting protein folding. The GroEL-GroES system forms a nano-cage that allows encapsulation of the non-native substrate proteins and provides a physical environment optimized to promote and accelerate protein folding. GroES binds to the apical surface of the GroEL ring, thereby capping the opening of the GroEL channel. This chain is Co-chaperonin GroES, found in Prochlorococcus marinus (strain MIT 9312).